Reading from the N-terminus, the 87-residue chain is Probable Fe(2+)-trafficking protein (87 aa).

The protein belongs to the Fe(2+)-trafficking protein family.

Its function is as follows. Could be a mediator in iron transactions between iron acquisition and iron-requiring processes, such as synthesis and/or repair of Fe-S clusters in biosynthetic enzymes. In Francisella tularensis subsp. mediasiatica (strain FSC147), this protein is Probable Fe(2+)-trafficking protein.